The sequence spans 293 residues: Triosephosphate isomerase (293 aa).

Position 25-27 (asparagine 25–lysine 27) interacts with substrate. The active-site Electrophile is the histidine 117. Glutamate 218 functions as the Proton acceptor in the catalytic mechanism.

This sequence belongs to the triosephosphate isomerase family. Homodimer.

The protein resides in the cytoplasm. It carries out the reaction D-glyceraldehyde 3-phosphate = dihydroxyacetone phosphate. It functions in the pathway carbohydrate biosynthesis; gluconeogenesis. The protein operates within carbohydrate degradation; glycolysis; D-glyceraldehyde 3-phosphate from glycerone phosphate: step 1/1. Involved in the gluconeogenesis. Catalyzes stereospecifically the conversion of dihydroxyacetone phosphate (DHAP) to D-glyceraldehyde-3-phosphate (G3P). The chain is Triosephosphate isomerase from Tropheryma whipplei (strain TW08/27) (Whipple's bacillus).